We begin with the raw amino-acid sequence, 405 residues long: Replication factor C large subunit (405 aa).

47–54 serves as a coordination point for ATP; that stretch reads GPPGVGKT.

It belongs to the activator 1 small subunits family. RfcL subfamily. Heteromultimer composed of small subunits (RfcS) and large subunits (RfcL).

Its function is as follows. Part of the RFC clamp loader complex which loads the PCNA sliding clamp onto DNA. This chain is Replication factor C large subunit, found in Saccharolobus islandicus (strain L.S.2.15 / Lassen #1) (Sulfolobus islandicus).